The chain runs to 1295 residues: Serine protease pet autotransporter (1295 aa).

A signal peptide spans 1-52 (MNKIYSIKYSAATGGLIAVSELAKKVICKTNRKISAALLSLAVISYTNIIYA). A Peptidase S6 domain is found at 54–304 (NMDISKAWAR…TPFDSKTTNE (251 aa)). Catalysis depends on charge relay system residues His-124, Asp-153, and Ser-260. One can recognise an Autotransporter domain in the interval 1029–1295 (DINGEAGAWA…AINANFRYSF (267 aa)).

Post-translationally, cleaved to release the mature protein from the outer membrane.

It is found in the periplasm. The protein resides in the secreted. Its subcellular location is the cell surface. It localises to the cell outer membrane. With respect to regulation, inhibition of cytotoxic activity by phenylmethylsulfonyl fluoride. In terms of biological role, serine protease with enterotoxic and cytotoxic activity. Internalization into the host cell is required for the induction of cytopathic effects. However, the serine activity is not necessary for secretion and internalization into the host cell. The chain is Serine protease pet autotransporter (pet) from Escherichia coli O44:H18 (strain 042 / EAEC).